A 113-amino-acid chain; its full sequence is uncharacterized protein (113 aa).

A signal peptide spans 1 to 22; the sequence is MCRFPTFLLIAIAITMLPTILS. The N-linked (GlcNAc...) asparagine glycan is linked to Asn47.

The protein resides in the secreted. This is an uncharacterized protein from Caenorhabditis elegans.